Consider the following 828-residue polypeptide: Mediator of RNA polymerase II transcription subunit 16 (828 aa).

5 WD repeats span residues 68–107 (GHQE…ANSW), 199–241 (RCRV…VSEK), 264–308 (DKFP…LPLN), 622–663 (NQGS…CLPV), and 777–816 (FPTE…TCLC).

The protein belongs to the Mediator complex subunit 16 family. In terms of assembly, component of the Mediator complex.

It is found in the nucleus. Functionally, component of the Mediator complex, a coactivator involved in the regulated transcription of nearly all RNA polymerase II-dependent genes. Mediator functions as a bridge to convey information from gene-specific regulatory proteins to the basal RNA polymerase II transcription machinery. Mediator is recruited to promoters by direct interactions with regulatory proteins and serves as a scaffold for the assembly of a functional preinitiation complex with RNA polymerase II and the general transcription factors. In Xenopus tropicalis (Western clawed frog), this protein is Mediator of RNA polymerase II transcription subunit 16 (med16).